Consider the following 382-residue polypeptide: Sphingoid long-chain base transporter RSB1 (382 aa).

The Extracellular portion of the chain corresponds to 1 to 34 (MSNATNNTLGSLLPQLEAAANSNSLYGGMVPNLR). N-linked (GlcNAc...) asparagine glycosylation is found at N3 and N6. A helical transmembrane segment spans residues 35–55 (FNITMIVIWGILLTIHVVQLL). At 56–57 (MR) the chain is on the cytoplasmic side. The helical transmembrane segment at 58-78 (QYWFSIAFICTGILEVLGFIG) threads the bilayer. The Extracellular segment spans residues 79–90 (RTWSHSNVADMD). Residues 91–111 (AFLLNMICLTIAPVFTMGGIY) traverse the membrane as a helical segment. Topologically, residues 112-135 (YQLAKLIEVYGHRFSLLPSPMAYS) are cytoplasmic. A helical transmembrane segment spans residues 136 to 156 (FIFICSDIVSLVVQAVGGGLC). The Extracellular segment spans residues 157 to 171 (GVAVTDGTSTTTGNH). The chain crosses the membrane as a helical span at residues 172 to 192 (VFIAGLAIQVASMAIFLMLWF). Over 193-241 (HFLFRIYISVRWEHINSRPISLSLLKISQTEVDYLYREKFHFLRLEPKR) the chain is Cytoplasmic. Residues 242–262 (WVFHYFNLAMTVAVLTIFTRC) form a helical membrane-spanning segment. At 263–281 (CYRLAELVVGWDGYLITHE) the chain is on the extracellular side. A helical membrane pass occupies residues 282–302 (WYFIILDALMMAIATVTLTIF). Topologically, residues 303–382 (HPGFAFKGRS…LFSSKKKAKL (80 aa)) are cytoplasmic.

The protein belongs to the lipid-translocating exporter (LTE) (TC 9.A.26.1) family.

The protein resides in the cell membrane. Its function is as follows. Catalyzes the ATP-dependent translocation of sphingoid long-chain bases (LCBs) from the cytoplasmic site toward the extracytoplasmic side of the membrane (flip-flop). Involved in the establishment of the functional lipid asymmetry of the plasma membrane. Regulates intracellular levels of LCBs, sphingolipid precursors that are growth inhibitory at increased levels. The chain is Sphingoid long-chain base transporter RSB1 (RSB1) from Saccharomyces cerevisiae (strain AWRI1631) (Baker's yeast).